Consider the following 339-residue polypeptide: Geranylgeranyl pyrophosphate synthase AN1592 (339 aa).

Isopentenyl diphosphate-binding residues include lysine 41, arginine 44, and histidine 73. Aspartate 80 and aspartate 84 together coordinate Mg(2+). Arginine 89 is a binding site for dimethylallyl diphosphate. Residue arginine 90 coordinates isopentenyl diphosphate. Positions 192, 193, and 228 each coordinate dimethylallyl diphosphate. Residue aspartate 231 coordinates Mg(2+). Positions 235, 245, and 255 each coordinate dimethylallyl diphosphate.

It belongs to the FPP/GGPP synthase family. Mg(2+) serves as cofactor.

The catalysed reaction is isopentenyl diphosphate + dimethylallyl diphosphate = (2E)-geranyl diphosphate + diphosphate. It catalyses the reaction isopentenyl diphosphate + (2E)-geranyl diphosphate = (2E,6E)-farnesyl diphosphate + diphosphate. The enzyme catalyses isopentenyl diphosphate + (2E,6E)-farnesyl diphosphate = (2E,6E,10E)-geranylgeranyl diphosphate + diphosphate. Its pathway is secondary metabolite biosynthesis. Geranylgeranyl pyrophosphate synthase; part of the gene cluster that mediates the biosynthesis of erinacines, cyathane-xylosides that show unique biological activities, including leishmanicidal activity, stimulating activity for nerve growth-factor synthesis, and agonistic activity toward the kappa opioid receptor. The geranylgeranyl diphosphate (GGPP) synthase eriE catalyzes the first step in erinacines biosynthesis via conversion of farnesyl pyrophosphate and isopentyl pyrophosphate into geranylgeranyl pyrophosphate (GGPP). GGPP is then substrate of the diterpene cyclase eriG for the production of cyatha-3,12-diene. The cytochrome P450 monooxygenase eriI then hydroxylates cyatha-3,12-diene at C-14 of the seven-membered ring to produce erinacol, which is further hydroxylated at C-15 by the cytochrome P450 monooxygenase eriC to yield cyathadiol. The cytochrome P450 monooxygenase eriA then catalyzes C-11 hydroxylation in the presence of the short chain dehydrogenase/reductase (SDR) eriH, which leads to the production of cyathatriol. The acetyltransferase eriL converts cyathatriol into 11-O-acetyl-cyathatriol. The SDR eriH catalyzes further oxidation of 11-O-acetyl-cyathatriol into 1-O-acetylcyathin A3. Finally, the glycosyl transferase eriJ tranfers xylose from UDP-xylose onto C-14 of 11-O-acetyl-cyathatriol to form eracine Q. EriJ is also able to convert 11-O-acetyl-cyathatriol to eracine Q2 by using UDP-D-glucose as cosubstrate, but at a lower rate. In the absence of eriL and eriJ, the SDR eriH is able to convert cyathatriol to cyathin A3; this is likely a switching mechanism in the biosynthesis of cyathins (C-14 ketogroup)and erinacines (C-14 glycosylated group). The roles of the SDR eriB, the polyprenyl transferase eriF and the dehydrogenase eriK have still to be identified. The sequence is that of Geranylgeranyl pyrophosphate synthase AN1592 from Hericium erinaceus (Lion's mane mushroom).